The following is a 131-amino-acid chain: Runt-related transcription factor 2 (131 aa).

The Runt domain maps to 1 to 10; sequence MRVGVPPQIP. The interval 1–75 is disordered; sequence MRVGVPPQIP…SSTRGTGLPV (75 aa). At Arg11 the chain carries Asymmetric dimethylarginine. Polar residues-rich tracts occupy residues 13-36 and 43-70; these read SLNS…RQAQ and YDQS…STRG.

As to quaternary structure, heterodimer of an alpha and a beta subunit. The alpha subunit binds DNA as a monomer and through the Runt domain. DNA-binding is increased by heterodimerization. Interacts with XRCC6 (Ku70) and XRCC5 (Ku80). Interacts with CCNB1, KAT6A and KAT6B. Interacts with HIVEP3. Interacts with IFI204. Interaction with SATB2; the interaction results in enhanced DNA binding and transactivation by these transcription factors. Binds to HIPK3. Interacts with FOXO1 (via a C-terminal region); the interaction inhibits RUNX2 transcriptional activity towards BGLAP. This interaction is prevented on insulin or IGF1 stimulation as FOXO1 is exported from the nucleus. Interacts with FOXP3. Interacts with TMEM119. Interacts with OLFM2. Interacts with IPO7; the interaction inhibits RUNX2 nuclear translocation in osteoblasts. Post-translationally, phosphorylated; probably by MAP kinases (MAPK). Phosphorylation by HIPK3 is required for the SPEN/MINT and FGF2 transactivation during osteoblastic differentiation.

It localises to the nucleus. The protein localises to the cytoplasm. Functionally, transcription factor involved in osteoblastic differentiation and skeletal morphogenesis. Essential for the maturation of osteoblasts and both intramembranous and endochondral ossification. CBF binds to the core site, 5'-PYGPYGGT-3', of a number of enhancers and promoters, including murine leukemia virus, polyomavirus enhancer, T-cell receptor enhancers, osteocalcin, osteopontin, bone sialoprotein, alpha 1(I) collagen, LCK, IL-3 and GM-CSF promoters. Inhibits KAT6B-dependent transcriptional activation. In osteoblasts, supports transcription activation: synergizes with SPEN/MINT to enhance FGFR2-mediated activation of the osteocalcin FGF-responsive element (OCFRE). The protein is Runt-related transcription factor 2 (RUNX2) of Equus caballus (Horse).